The primary structure comprises 409 residues: Putative lipoate-protein ligase A (409 aa).

Residues 146-330 form the BPL/LPL catalytic domain; it reads GPDNCRLLFY…RFQKTFKVDG (185 aa). Residues arginine 188, 193–196, and lysine 249 each bind ATP; that span reads GTVL. Lysine 249 provides a ligand contact to (R)-lipoate.

It belongs to the LplA family. Monomer.

It carries out the reaction L-lysyl-[lipoyl-carrier protein] + (R)-lipoate + ATP = N(6)-[(R)-lipoyl]-L-lysyl-[lipoyl-carrier protein] + AMP + diphosphate + H(+). Its pathway is protein modification; protein lipoylation via exogenous pathway; protein N(6)-(lipoyl)lysine from lipoate: step 1/2. It functions in the pathway protein modification; protein lipoylation via exogenous pathway; protein N(6)-(lipoyl)lysine from lipoate: step 2/2. Functionally, catalyzes both the ATP-dependent activation of exogenously supplied lipoate to lipoyl-AMP and the transfer of the activated lipoyl onto the lipoyl domains of lipoate-dependent enzymes. This chain is Putative lipoate-protein ligase A (AIM22), found in Saccharomyces cerevisiae (strain ATCC 204508 / S288c) (Baker's yeast).